A 2543-amino-acid chain; its full sequence is Highly reducing polyketide synthase GPY1 (2543 aa).

Residues 9–435 form the Ketosynthase family 3 (KS3) domain; sequence REPIAIVSMA…GSTAHAVVEF (427 aa). Active-site for beta-ketoacyl synthase activity residues include C182, H318, and H358. Residues 574–881 are malonyl-CoA:ACP transacylase (MAT) domain; it reads TFTGQGAMWS…PFFATMLRNA (308 aa). The segment at 953–1089 is N-terminal hotdog fold; that stretch reads HEILGSRCRG…GRAAVLETSK (137 aa). The interval 953–1253 is dehydratase (DH) domain; that stretch reads HEILGSRCRG…GLQMDRATSD (301 aa). The region spanning 953 to 1256 is the PKS/mFAS DH domain; that stretch reads HEILGSRCRG…MDRATSDDNT (304 aa). The active-site Proton acceptor; for dehydratase activity is H985. A C-terminal hotdog fold region spans residues 1103–1256; that stretch reads MPLKVPLKSY…MDRATSDDNT (154 aa). The Proton donor; for dehydratase activity role is filled by D1169. A methyltransferase (CMet) domain region spans residues 1399–1587; it reads NDLLYRFYEE…LDEWRNELAA (189 aa). Residues 1830–2136 are enoyl reductase (ER) domain; sequence GILESLTMAQ…IEGTSNKQVV (307 aa). The segment at 2161-2335 is ketoreductase (KR) domain; that stretch reads TYIITGGLGG…ASSVDLGFVE (175 aa). The Carrier domain occupies 2464 to 2541; that stretch reads ALQPFVCTAL…DLSARVSRMI (78 aa). S2501 carries the O-(pantetheine 4'-phosphoryl)serine modification.

Highly reducing polyketide synthase; part of the gene cluster that mediates the biosynthesis of gibepyrone A, a 2H-pyran-2-one metabolite exhibiting a moderate antimicrobial activity against Gram-positive bacteria and yeasts. The highly reducing polyketide synthase GPY1 is sufficient to produce gibepyrone A. GPY1 uses an acetyl-CoA starter unit, three malonyl-CoA extender units, and two SAM-dependent methylations to establish the gibepyrone A carbon backbone, followed by product release upon intramolecular cyclization. The gibepyrone A derivatives gibepyrones B and D are produced by cluster-independent P450 monooxygenases, probably to protect the fungus from the toxic product. In contrast, the formation of gibepyrones E and F from gibepyrone A is a spontaneous process and independent of enzymatic activity. This Gibberella fujikuroi (strain CBS 195.34 / IMI 58289 / NRRL A-6831) (Bakanae and foot rot disease fungus) protein is Highly reducing polyketide synthase GPY1.